Here is a 230-residue protein sequence, read N- to C-terminus: Ribonuclease 3 (230 aa).

The RNase III domain maps to Asp-10–Ser-133. Glu-46 lines the Mg(2+) pocket. Residue Asp-50 is part of the active site. Positions 119 and 122 each coordinate Mg(2+). Residue Glu-122 is part of the active site. A DRBM domain is found at Asp-161–Gln-230.

The protein belongs to the ribonuclease III family. Homodimer. Mg(2+) serves as cofactor.

Its subcellular location is the cytoplasm. It carries out the reaction Endonucleolytic cleavage to 5'-phosphomonoester.. Digests double-stranded RNA. Involved in the processing of primary rRNA transcript to yield the immediate precursors to the large and small rRNAs (23S and 16S). Processes some mRNAs, and tRNAs when they are encoded in the rRNA operon. Processes pre-crRNA and tracrRNA of type II CRISPR loci if present in the organism. This chain is Ribonuclease 3, found in Acinetobacter baumannii (strain SDF).